The primary structure comprises 416 residues: Chaperone protein dnaJ A6 (416 aa).

A J domain is found at 12–73 (KYYEVLGVPK…EKRDIYDQYG (62 aa)). A CR-type zinc finger spans residues 133-217 (GSMKKLSLSR…CRASKVIQEK (85 aa)). Zn(2+) is bound by residues cysteine 146, cysteine 149, cysteine 162, cysteine 165, cysteine 189, cysteine 192, cysteine 205, and cysteine 208. 3 CXXCXGXG motif repeats span residues 146-153 (CPKCKGKG), 162-169 (CYGCHGVG), and 189-196 (CPECRGSG). Basic and acidic residues predominate over residues 380–399 (HDVNIEEEMRRKQYQRKQEA). The tract at residues 380 to 416 (HDVNIEEEMRRKQYQRKQEAYDEDEEEDAPRVQCAQQ) is disordered.

This sequence belongs to the DnaJ family. As to quaternary structure, interacts with ZFP1.

It localises to the nucleus. Its subcellular location is the cytoplasm. In terms of biological role, involved in disease resistance. Acts as a negative regulator of innate immunity to the rice blast fungus (Magnaporthe oryzae). Acts as a negative regulator of the pathogen-associated molecular pattern (PAMP)-triggered immunity (PTI) response through the inhibition of reactive oxygen species (ROS) accumulation and expression of defense-related genes. May function via the ubiquitin-proteasome degradation pathway. This is Chaperone protein dnaJ A6 from Oryza sativa subsp. japonica (Rice).